Reading from the N-terminus, the 416-residue chain is Phosphatidylserine decarboxylase proenzyme, mitochondrial (416 aa).

Residues 1–67 lie on the Mitochondrial matrix side of the membrane; the sequence is MPGKSTRPLP…GRLHFPQLAL (67 aa). The chain crosses the membrane as a helical span at residues 68–86; the sequence is RRRLGQLSCMSKPALKLRS. The Mitochondrial intermembrane portion of the chain corresponds to 87-416; the sequence is WPLTVLYYLL…IRFGEALGSL (330 aa). Catalysis depends on charge relay system; for autoendoproteolytic cleavage activity residues D198, H274, and S385. S385 (schiff-base intermediate with substrate; via pyruvic acid; for decarboxylase activity) is an active-site residue. S385 bears the Pyruvic acid (Ser); by autocatalysis mark.

This sequence belongs to the phosphatidylserine decarboxylase family. PSD-B subfamily. Eukaryotic type I sub-subfamily. In terms of assembly, heterodimer of a large membrane-associated beta subunit and a small pyruvoyl-containing alpha subunit. Requires pyruvate as cofactor. Is synthesized initially as an inactive proenzyme. Formation of the active enzyme involves a self-maturation process in which the active site pyruvoyl group is generated from an internal serine residue via an autocatalytic post-translational modification. Two non-identical subunits are generated from the proenzyme in this reaction, and the pyruvate is formed at the N-terminus of the alpha chain, which is derived from the carboxyl end of the proenzyme. The autoendoproteolytic cleavage occurs by a canonical serine protease mechanism, in which the side chain hydroxyl group of the serine supplies its oxygen atom to form the C-terminus of the beta chain, while the remainder of the serine residue undergoes an oxidative deamination to produce ammonia and the pyruvoyl prosthetic group on the alpha chain. During this reaction, the Ser that is part of the protease active site of the proenzyme becomes the pyruvoyl prosthetic group, which constitutes an essential element of the active site of the mature decarboxylase.

Its subcellular location is the mitochondrion inner membrane. It localises to the cytoplasm. The protein resides in the lipid droplet. The catalysed reaction is a 1,2-diacyl-sn-glycero-3-phospho-L-serine + H(+) = a 1,2-diacyl-sn-glycero-3-phosphoethanolamine + CO2. It participates in phospholipid metabolism; phosphatidylethanolamine biosynthesis. Functionally, catalyzes the formation of phosphatidylethanolamine (PtdEtn) from phosphatidylserine (PtdSer). Plays a central role in phospholipid metabolism and in the interorganelle trafficking of phosphatidylserine. May be involved in lipid droplet biogenesis at the endoplasmic reticulum membrane. The sequence is that of Phosphatidylserine decarboxylase proenzyme, mitochondrial from Bos taurus (Bovine).